A 924-amino-acid chain; its full sequence is Periplasmic nitrate reductase (924 aa).

A signal peptide (tat-type signal) is located at residues 1-30 (MNRRDFIKNTAIASAASVAGLSVPSSMLGA). A 4Fe-4S Mo/W bis-MGD-type domain is found at 35–91 (WKWDKAVCRFCGTGCGIMIARKDGKIVATKGDPAAPVNRGLNCIKGYFNAKIMYGED). [4Fe-4S] cluster is bound by residues C42, C45, C49, and C77. Residues K79, Q147, N172, C176, 209 to 216 (WGANMAEM), M417, Q421, N527, 552 to 553 (SD), K575, D602, and 814 to 823 (TGRVLEHWHS) contribute to the Mo-bis(molybdopterin guanine dinucleotide) site. Substrate is bound at residue W890. N898 and K915 together coordinate Mo-bis(molybdopterin guanine dinucleotide).

The protein belongs to the prokaryotic molybdopterin-containing oxidoreductase family. NasA/NapA/NarB subfamily. As to quaternary structure, component of the periplasmic nitrate reductase NapAB complex composed of NapA and NapB. It depends on [4Fe-4S] cluster as a cofactor. Mo-bis(molybdopterin guanine dinucleotide) is required as a cofactor. Post-translationally, predicted to be exported by the Tat system. The position of the signal peptide cleavage has not been experimentally proven.

The protein resides in the periplasm. It catalyses the reaction 2 Fe(II)-[cytochrome] + nitrate + 2 H(+) = 2 Fe(III)-[cytochrome] + nitrite + H2O. In terms of biological role, catalytic subunit of the periplasmic nitrate reductase complex NapAB. Receives electrons from NapB and catalyzes the reduction of nitrate to nitrite. In Campylobacter jejuni subsp. jejuni serotype O:2 (strain ATCC 700819 / NCTC 11168), this protein is Periplasmic nitrate reductase.